The sequence spans 338 residues: Tetraacyldisaccharide 4'-kinase (338 aa).

63-70 is an ATP binding site; the sequence is TVGGSGKT.

It belongs to the LpxK family.

The catalysed reaction is a lipid A disaccharide + ATP = a lipid IVA + ADP + H(+). It participates in glycolipid biosynthesis; lipid IV(A) biosynthesis; lipid IV(A) from (3R)-3-hydroxytetradecanoyl-[acyl-carrier-protein] and UDP-N-acetyl-alpha-D-glucosamine: step 6/6. In terms of biological role, transfers the gamma-phosphate of ATP to the 4'-position of a tetraacyldisaccharide 1-phosphate intermediate (termed DS-1-P) to form tetraacyldisaccharide 1,4'-bis-phosphate (lipid IVA). In Shewanella loihica (strain ATCC BAA-1088 / PV-4), this protein is Tetraacyldisaccharide 4'-kinase.